Here is a 381-residue protein sequence, read N- to C-terminus: Dual-specificity RNA methyltransferase RlmN (381 aa).

Residue Glu95 is the Proton acceptor of the active site. The 247-residue stretch at 101–347 (EDDRGTLCVS…TTVRKTRGDD (247 aa)) folds into the Radical SAM core domain. Cys108 and Cys352 are joined by a disulfide. [4Fe-4S] cluster contacts are provided by Cys115, Cys119, and Cys122. S-adenosyl-L-methionine-binding positions include 178 to 179 (GE), Ser210, 232 to 234 (SLH), and Asn309. Catalysis depends on Cys352, which acts as the S-methylcysteine intermediate.

It belongs to the radical SAM superfamily. RlmN family. [4Fe-4S] cluster serves as cofactor.

Its subcellular location is the cytoplasm. It catalyses the reaction adenosine(2503) in 23S rRNA + 2 reduced [2Fe-2S]-[ferredoxin] + 2 S-adenosyl-L-methionine = 2-methyladenosine(2503) in 23S rRNA + 5'-deoxyadenosine + L-methionine + 2 oxidized [2Fe-2S]-[ferredoxin] + S-adenosyl-L-homocysteine. The catalysed reaction is adenosine(37) in tRNA + 2 reduced [2Fe-2S]-[ferredoxin] + 2 S-adenosyl-L-methionine = 2-methyladenosine(37) in tRNA + 5'-deoxyadenosine + L-methionine + 2 oxidized [2Fe-2S]-[ferredoxin] + S-adenosyl-L-homocysteine. Its function is as follows. Specifically methylates position 2 of adenine 2503 in 23S rRNA and position 2 of adenine 37 in tRNAs. m2A2503 modification seems to play a crucial role in the proofreading step occurring at the peptidyl transferase center and thus would serve to optimize ribosomal fidelity. The chain is Dual-specificity RNA methyltransferase RlmN from Bordetella petrii (strain ATCC BAA-461 / DSM 12804 / CCUG 43448).